Consider the following 253-residue polypeptide: Endonuclease NucS (253 aa).

Residues 63–91 form a disordered region; the sequence is IDDPDTDFTDGSSVGNSEEQGTDGSAHTA. The segment covering 71–87 has biased composition (polar residues); the sequence is TDGSSVGNSEEQGTDGS.

It belongs to the NucS endonuclease family.

Its subcellular location is the cytoplasm. Its function is as follows. Cleaves both 3' and 5' ssDNA extremities of branched DNA structures. The polypeptide is Endonuclease NucS (Corynebacterium kroppenstedtii (strain DSM 44385 / JCM 11950 / CIP 105744 / CCUG 35717)).